The primary structure comprises 390 residues: MPNPEASLSPRSARYPKASMHVVPMLAPNDTAAFRALFASGAVDPASVVALIAKSEGSGLHNDHARVFADVSLRTALAEARGCPVEDLADSVTVAVSGGSPGVISPHVTVVTQEWVADLPAGLPGVGLVVGRGHTEPILPEDIGRTAQVDKVADAVAAAMLDAGVTDPDDVHLVMVKGPALSSRAVADALSRGKTVVTGDYGIGPMGSMCWSNDASALGVAVALGEVKRDLVADDRIRSDWDLFSAVAATSSGGEKRGGEVLLLANSAQSASELRIGHGITRDMADTEGIKTAIRTAGVDFDCCLSPAQQAQVVQVFGKFVLPGSDVLRGQHITALDDHEAHHVAKAVGGALVVSITGQPMSFISGGERNSHMGPPGGNPVAAVVRRLPA.

The interval 1–118 (MPNPEASLSP…TVVTQEWVAD (118 aa)) is RU A. Residues Arg-66 and 97-98 (SG) contribute to the substrate site. An RU B region spans residues 127–268 (GLVVGRGHTE…GEVLLLANSA (142 aa)). The active site involves Lys-177. Residues Asn-213, 251 to 252 (SS), Lys-346, and 365 to 366 (SG) each bind substrate. Ser-251 acts as the Nucleophile in catalysis. Positions 274 to 390 (LRIGHGITRD…VAAVVRRLPA (117 aa)) are RU C.

The protein belongs to the cyclic amide hydrolase (CyAH) family. As to quaternary structure, homotetramer; disulfide-linked. The disulfide forms between 2 monomers in the tetramer, such that each tetramer contains 2 sets of vicinal disulfides.

Cyclic amide hydrolase of unknown substrate specificity. Catalyzes the hydrolytic ring-opening of a cyclic amide. Does not act on cyanuric acid nor barbituric acid. This chain is Cyclic amide hydrolase, found in Pseudofrankia inefficax (strain DSM 45817 / CECT 9037 / DDB 130130 / EuI1c) (Frankia inefficax).